Consider the following 227-residue polypeptide: Phage shock protein A homolog (227 aa).

The stretch at 33–125 (LRNMNSDLAK…AQMRKMHDKL (93 aa)) forms a coiled coil. Residues 191–211 (SAPQDDMADLSAKYDTGGSSQ) form a disordered region.

The protein belongs to the PspA/Vipp/IM30 family.

This Bacillus subtilis (strain 168) protein is Phage shock protein A homolog (ydjF).